The primary structure comprises 307 residues: N-acetylmuramic acid 6-phosphate etherase (307 aa).

Residues 62–225 (VVDAFRVGGR…TTASMIRIGK (164 aa)) enclose the SIS domain. Catalysis depends on glutamate 90, which acts as the Proton donor. Glutamate 121 is an active-site residue.

The protein belongs to the GCKR-like family. MurNAc-6-P etherase subfamily. As to quaternary structure, homodimer.

The catalysed reaction is N-acetyl-D-muramate 6-phosphate + H2O = N-acetyl-D-glucosamine 6-phosphate + (R)-lactate. It functions in the pathway amino-sugar metabolism; 1,6-anhydro-N-acetylmuramate degradation. It participates in amino-sugar metabolism; N-acetylmuramate degradation. Its pathway is cell wall biogenesis; peptidoglycan recycling. Functionally, specifically catalyzes the cleavage of the D-lactyl ether substituent of MurNAc 6-phosphate, producing GlcNAc 6-phosphate and D-lactate. Together with AnmK, is also required for the utilization of anhydro-N-acetylmuramic acid (anhMurNAc) either imported from the medium or derived from its own cell wall murein, and thus plays a role in cell wall recycling. In Brucella anthropi (strain ATCC 49188 / DSM 6882 / CCUG 24695 / JCM 21032 / LMG 3331 / NBRC 15819 / NCTC 12168 / Alc 37) (Ochrobactrum anthropi), this protein is N-acetylmuramic acid 6-phosphate etherase.